Consider the following 251-residue polypeptide: Transmembrane ascorbate-dependent reductase CYB561 (251 aa).

N-acetylmethionine is present on Met1. Residues 1-16 (MEGGAAAATPTALPYY) are Cytoplasmic-facing. A helical membrane pass occupies residues 17–37 (VAFSQLLGLTLVAMTGAWLGL). Residues 19 to 220 (FSQLLGLTLV…FGGAVLYILT (202 aa)) form the Cytochrome b561 domain. Topologically, residues 38–51 (YRGGIAWESDLQFN) are vesicular. A helical membrane pass occupies residues 52–72 (AHPLCMVIGLIFLQGNALLVY). The heme b site is built by His53, Arg73, and Lys80. Residues 73 to 85 (RVFRNEAKRTTKV) are Cytoplasmic-facing. Lys80 and Lys84 together coordinate L-ascorbate. The helical transmembrane segment at 86–106 (LHGLLHIFALVIALVGLVAVF) threads the bilayer. Residues His87, 116–119 (DLYS), and His121 contribute to the heme b site. The Vesicular portion of the chain corresponds to 107-124 (DYHRKKGYADLYSLHSWC). A helical membrane pass occupies residues 125-145 (GILVFVLYFVQWLVGFSFFLF). Residues 146-158 (PGASFSLRSRYRP) are Cytoplasmic-facing. Arg153 contributes to the L-ascorbate binding site. A helical membrane pass occupies residues 159-179 (QHIFFGATIFLLSVGTALLGL). Positions 160 and 181 each coordinate heme b. Residues 180 to 198 (KEALLFNLGGKYSAFEPEG) lie on the Vesicular side of the membrane. A helical transmembrane segment spans residues 199-219 (VLANVLGLLLACFGGAVLYIL). Residues 220–251 (TRADWKRPSQAEEQALSMDFKTLTEGDSPGSQ) are Cytoplasmic-facing. Lys225 contributes to the heme b binding site. Ser247 is modified (phosphoserine).

Heme b is required as a cofactor. As to expression, expressed in many tissues, in particular the brain especially in the cortex and hippocampus.

The protein resides in the cytoplasmic vesicle. It is found in the secretory vesicle. Its subcellular location is the chromaffin granule membrane. The catalysed reaction is monodehydro-L-ascorbate radical(out) + L-ascorbate(in) = monodehydro-L-ascorbate radical(in) + L-ascorbate(out). Its function is as follows. Transmembrane reductase that uses ascorbate as an electron donor in the cytoplasm and transfers electrons across membranes to reduce monodehydro-L-ascorbate radical in the lumen of secretory vesicles. It is therefore involved the regeneration and homeostasis within secretory vesicles of ascorbate which in turn provides reducing equivalents needed to support the activity of intravesicular enzymes. In Homo sapiens (Human), this protein is Transmembrane ascorbate-dependent reductase CYB561.